Consider the following 212-residue polypeptide: GrpE protein homolog, mitochondrial (212 aa).

It belongs to the GrpE family. In terms of assembly, component of the PAM complex, at least composed of mtHsp70, MGE1, TIM44, PAM16, PAM17 and PAM18.

The protein localises to the mitochondrion matrix. In terms of biological role, essential component of the PAM complex, a complex required for the translocation of transit peptide-containing proteins from the inner membrane into the mitochondrial matrix in an ATP-dependent manner. Seems to control the nucleotide-dependent binding of SSC1 to substrate proteins. The chain is GrpE protein homolog, mitochondrial (mge1) from Eremothecium gossypii (strain ATCC 10895 / CBS 109.51 / FGSC 9923 / NRRL Y-1056) (Yeast).